The following is a 148-amino-acid chain: Large ribosomal subunit protein bL9 (148 aa).

Belongs to the bacterial ribosomal protein bL9 family.

Binds to the 23S rRNA. In Bacillus cereus (strain B4264), this protein is Large ribosomal subunit protein bL9.